The chain runs to 656 residues: Pyoverdine export ATP-binding/permease protein PvdT (656 aa).

One can recognise an ABC transporter domain in the interval 6–245 (IDLRGIRKSY…SANPAALQAV (240 aa)). 43–50 (GASGSGKS) lines the ATP pocket. Transmembrane regions (helical) follow at residues 284-304 (ALTL…LAVG), 538-558 (IAAI…LMTV), 589-609 (LSVV…AALL), and 619-639 (LSAV…FGFM).

Belongs to the ABC transporter superfamily. Macrolide exporter (TC 3.A.1.122) family. In terms of assembly, part of the tripartite efflux system PvdRT-OpmQ, which is composed of an inner membrane component with both ATPase and permease domains, PvdT, a periplasmic membrane fusion protein, PvdR, and an outer membrane component, OpmQ.

The protein localises to the cell inner membrane. Part of the tripartite efflux system PvdRT-OpmQ required for the secretion into the extracellular milieu of the siderophore pyoverdine (PVD), which is involved in iron acquisition. This subunit binds PVD and drives its secretion by hydrolyzing ATP. The system is responsible for export of newly synthesized PVD after the final steps of biosynthesis have taken place in the periplasm. It is also responsible for recycling of PVD after internalization of ferri-PVD into the periplasm by the outer-membrane receptor FpvA and release of iron from PVD, thus making PVD available for new cycles of iron uptake. This is Pyoverdine export ATP-binding/permease protein PvdT from Pseudomonas syringae pv. tomato (strain ATCC BAA-871 / DC3000).